We begin with the raw amino-acid sequence, 339 residues long: MNASDASMTVIGAGSYGTALAITLARNGHRVVLWGHNPAHIQALQAARCNQAFLPDVPFPDSLQLETNLGQALAASRNVLVVVPSHVFGDVLRQLKPHLRADARIVWATKGLEAETGRLLQDVAREALGETIPLAVVSGPTFAKELAAGMPTAIALASTDREFADDLQRLLHCGKSFRVYSNPDFIGVQLGGAVKNVIAIGAGMSDGIGFGANARTALITRGLAEMTRLGTALGADPTTFMGMAGLGDLVLTCTDNQSRNRRFGMMLGQGMDVQSAQDSIGQVVEGYRNTKEVLALAQRYGVEMPITEQLWQVLYCGKDAREAALSLLGRTRKDETAKL.

NADPH-binding residues include Ser15, Tyr16, His36, and Lys110. Residues Lys110, Gly139, and Thr141 each contribute to the sn-glycerol 3-phosphate site. Ala143 is an NADPH binding site. The sn-glycerol 3-phosphate site is built by Lys195, Asp248, Ser258, Arg259, and Asn260. Lys195 serves as the catalytic Proton acceptor. Arg259 contributes to the NADPH binding site. NADPH is bound by residues Val283 and Glu285.

The protein belongs to the NAD-dependent glycerol-3-phosphate dehydrogenase family.

The protein localises to the cytoplasm. It carries out the reaction sn-glycerol 3-phosphate + NAD(+) = dihydroxyacetone phosphate + NADH + H(+). It catalyses the reaction sn-glycerol 3-phosphate + NADP(+) = dihydroxyacetone phosphate + NADPH + H(+). Its pathway is membrane lipid metabolism; glycerophospholipid metabolism. In terms of biological role, catalyzes the reduction of the glycolytic intermediate dihydroxyacetone phosphate (DHAP) to sn-glycerol 3-phosphate (G3P), the key precursor for phospholipid synthesis. The protein is Glycerol-3-phosphate dehydrogenase [NAD(P)+] of Pectobacterium carotovorum subsp. carotovorum (strain PC1).